Here is a 299-residue protein sequence, read N- to C-terminus: Lathosterol oxidase (299 aa).

The next 3 helical transmembrane spans lie at 32-52 (ISLL…CATL), 79-99 (FTVQ…LLEI), and 117-137 (FELV…IYWI). The region spanning 124–252 (ISFLFFTDMF…YFTLWDRIGG (129 aa)) is the Fatty acid hydroxylase domain. The short motif at 138 to 143 (HRGLHH) is the Histidine box-1 element. A Histidine box-2 motif is present at residues 151–155 (HKPHH). The chain crosses the membrane as a helical span at residues 186-206 (IFPLHKVVYLSLYILVNIWTI). The Histidine box-3 motif lies at 228-233 (HHTDHH). Serine 253 carries the phosphoserine modification. A disordered region spans residues 274–299 (EGKRSSHSGNGCKNEKLFNGEFTKTE). Positions 286–299 (KNEKLFNGEFTKTE) are enriched in basic and acidic residues.

It belongs to the sterol desaturase family. Requires Fe cation as cofactor.

It localises to the endoplasmic reticulum membrane. The catalysed reaction is a Delta(7)-sterol + 2 Fe(II)-[cytochrome b5] + O2 + 2 H(+) = a Delta(5),Delta(7)-sterol + 2 Fe(III)-[cytochrome b5] + 2 H2O. It catalyses the reaction lathosterol + 2 Fe(II)-[cytochrome b5] + O2 + 2 H(+) = 7-dehydrocholesterol + 2 Fe(III)-[cytochrome b5] + 2 H2O. The enzyme catalyses 5alpha-cholesta-7,24-dien-3beta-ol + 2 Fe(II)-[cytochrome b5] + O2 + 2 H(+) = 7-dehydrodesmosterol + 2 Fe(III)-[cytochrome b5] + 2 H2O. The protein operates within steroid biosynthesis; cholesterol biosynthesis. Functionally, catalyzes the penultimate step of the biosynthesis of cholesterol, the dehydrogenation of lathosterol into 7-dehydrocholesterol (7-DHC). Cholesterol is the major sterol component in mammalian membranes and a precursor for bile acid and steroid hormone synthesis. In addition to its essential role in cholesterol biosynthesis, it also indirectly regulates ferroptosis through the production of 7-DHC. By diverting the spread of damage caused by peroxyl radicals from the phospholipid components to its sterol nucleus, 7-DHC prevents this form of cell death. This Homo sapiens (Human) protein is Lathosterol oxidase.